A 140-amino-acid chain; its full sequence is Large ribosomal subunit protein uL16 (140 aa).

It belongs to the universal ribosomal protein uL16 family. In terms of assembly, part of the 50S ribosomal subunit.

Binds 23S rRNA and is also seen to make contacts with the A and possibly P site tRNAs. The sequence is that of Large ribosomal subunit protein uL16 from Onion yellows phytoplasma (strain OY-M).